A 199-amino-acid chain; its full sequence is Adult-specific cuticular protein ACP-22 (199 aa).

A signal peptide spans 1–19 (MRLFIILSVASFGAIGVLS). The segment at 63–103 (GGGGGGGGEGEEGREHELRGGGLELGGGGGGGGGGGGGGGE) is disordered. Residues 82–102 (GGGLELGGGGGGGGGGGGGGG) show a composition bias toward gly residues. One can recognise a Chitin-binding type R&amp;R domain in the interval 133–199 (HPEYHSDYHV…IARVSYRKHH (67 aa)).

In terms of tissue distribution, epidermal regions synthesizing hard cuticle.

In terms of biological role, cuticular proteins play a significant role in determining the physical properties of cuticles. The chain is Adult-specific cuticular protein ACP-22 (ACP22) from Tenebrio molitor (Yellow mealworm beetle).